A 249-amino-acid polypeptide reads, in one-letter code: MNVADLLASSRHCVVFTGAGISAESGVPTFRGPGGLWERYKPEELATPEAFARDPALVWRWYKWRQEVIYNARPSPGHYAIAELEAMGVVRGVITQNVDGLHQRAGSRLVVELHGSIWRARCVKCGSVYILDKPVEEVPPLCRKCGGLLRPDVVWFGEPLPQEAWRAAVELASVSDVLLVVGTSGVVYPAAYIPRIAKEAGARVVEINVEPSAITPIADVFIQGRAGEVLPRLVEEVKRRLRTRQALTP.

A Deacetylase sirtuin-type domain is found at 1-240; the sequence is MNVADLLASS…PRLVEEVKRR (240 aa). 18 to 37 contacts NAD(+); it reads GAGISAESGVPTFRGPGGLW. Residues tyrosine 62 and arginine 65 each coordinate substrate. 96–99 serves as a coordination point for NAD(+); it reads QNVD. Residue histidine 114 is the Proton acceptor of the active site. Positions 122, 125, 142, and 145 each coordinate Zn(2+). NAD(+) is bound by residues 182 to 184, 208 to 210, and alanine 226; these read GTS and NVE.

It belongs to the sirtuin family. Class III subfamily. It depends on Zn(2+) as a cofactor.

Its subcellular location is the cytoplasm. The enzyme catalyses N(6)-acetyl-L-lysyl-[protein] + NAD(+) + H2O = 2''-O-acetyl-ADP-D-ribose + nicotinamide + L-lysyl-[protein]. It carries out the reaction N(6)-succinyl-L-lysyl-[protein] + NAD(+) + H2O = 2''-O-succinyl-ADP-D-ribose + nicotinamide + L-lysyl-[protein]. Its function is as follows. NAD-dependent lysine deacetylase and desuccinylase that specifically removes acetyl and succinyl groups on target proteins. Modulates the activities of several proteins which are inactive in their acylated form. Deacetylates the N-terminal lysine residue of Alba, the major archaeal chromatin protein and that, in turn, increases Alba's DNA binding affinity, thereby repressing transcription. This chain is NAD-dependent protein deacylase 2, found in Pyrobaculum aerophilum (strain ATCC 51768 / DSM 7523 / JCM 9630 / CIP 104966 / NBRC 100827 / IM2).